A 386-amino-acid chain; its full sequence is Succinate--CoA ligase [ADP-forming] subunit beta (386 aa).

Residues 9-244 enclose the ATP-grasp domain; that stretch reads KEILRSYGVS…LDEEDPKEVE (236 aa). ATP-binding positions include K46, 53 to 55, E99, C102, and E107; that span reads GRG. Mg(2+) contacts are provided by N199 and D213. Substrate contacts are provided by residues N264 and 321-323; that span reads GIM.

This sequence belongs to the succinate/malate CoA ligase beta subunit family. As to quaternary structure, heterotetramer of two alpha and two beta subunits. Requires Mg(2+) as cofactor.

It catalyses the reaction succinate + ATP + CoA = succinyl-CoA + ADP + phosphate. It carries out the reaction GTP + succinate + CoA = succinyl-CoA + GDP + phosphate. The protein operates within carbohydrate metabolism; tricarboxylic acid cycle; succinate from succinyl-CoA (ligase route): step 1/1. Its function is as follows. Succinyl-CoA synthetase functions in the citric acid cycle (TCA), coupling the hydrolysis of succinyl-CoA to the synthesis of either ATP or GTP and thus represents the only step of substrate-level phosphorylation in the TCA. The beta subunit provides nucleotide specificity of the enzyme and binds the substrate succinate, while the binding sites for coenzyme A and phosphate are found in the alpha subunit. The chain is Succinate--CoA ligase [ADP-forming] subunit beta from Geobacillus thermodenitrificans (strain NG80-2).